The sequence spans 295 residues: ATP synthase gamma chain (295 aa).

Belongs to the ATPase gamma chain family. F-type ATPases have 2 components, CF(1) - the catalytic core - and CF(0) - the membrane proton channel. CF(1) has five subunits: alpha(3), beta(3), gamma(1), delta(1), epsilon(1). CF(0) has three main subunits: a, b and c.

The protein resides in the cell membrane. Its function is as follows. Produces ATP from ADP in the presence of a proton gradient across the membrane. The gamma chain is believed to be important in regulating ATPase activity and the flow of protons through the CF(0) complex. The chain is ATP synthase gamma chain from Desulforudis audaxviator (strain MP104C).